A 287-amino-acid chain; its full sequence is Probable 18S rRNA (guanine-N(7))-methyltransferase (287 aa).

Residues 214-287 are disordered; that stretch reads GVEGEEYEQQ…FSGRKRGPKF (74 aa). Over residues 217–228 the composition is skewed to acidic residues; it reads GEEYEQQEEEDS. Basic residues predominate over residues 234–245; the sequence is SNRKRDRRRVTK. The segment covering 253-278 has biased composition (basic and acidic residues); it reads KTKEWIMNKKDRQRKQGREIKNDSKF.

It belongs to the class I-like SAM-binding methyltransferase superfamily. BUD23/WBSCR22 family.

The protein resides in the nucleus. The protein localises to the nucleoplasm. It is found in the cytoplasm. Its subcellular location is the perinuclear region. The enzyme catalyses a guanosine in 18S rRNA + S-adenosyl-L-methionine = an N(7)-methylguanosine in 18S rRNA + S-adenosyl-L-homocysteine. Functionally, S-adenosyl-L-methionine-dependent methyltransferase that specifically methylates the N(7) position of a guanine in 18S rRNA. Important for biogenesis end export of the 40S ribosomal subunit independent on its methyltransferase activity. S-adenosyl-L-methionine-dependent methyltransferase that specifically methylates the N(7) position of a guanine in 18S rRNA. Requires the methyltransferase adapter protein TRM112 for full rRNA methyltransferase activity. Involved in the pre-rRNA processing steps leading to small-subunit rRNA production independently of its RNA-modifying catalytic activity. Important for biogenesis end export of the 40S ribosomal subunit independent on its methyltransferase activity. In Dictyostelium discoideum (Social amoeba), this protein is Probable 18S rRNA (guanine-N(7))-methyltransferase.